The chain runs to 326 residues: Probable cell division protein WhiA (326 aa).

The H-T-H motif DNA-binding region spans Ser-275–Ser-308.

The protein belongs to the WhiA family.

Functionally, involved in cell division and chromosome segregation. This is Probable cell division protein WhiA from Beutenbergia cavernae (strain ATCC BAA-8 / DSM 12333 / CCUG 43141 / JCM 11478 / NBRC 16432 / NCIMB 13614 / HKI 0122).